The following is a 196-amino-acid chain: Anthranilate synthase component 2 (196 aa).

The 194-residue stretch at Val3 to Met196 folds into the Glutamine amidotransferase type-1 domain. Position 60–62 (Gly60–Gly62) interacts with L-glutamine. Cys89 (nucleophile; for GATase activity) is an active-site residue. Residues Gln93 and Ser138–Leu139 contribute to the L-glutamine site. Catalysis depends on for GATase activity residues His177 and Glu179.

Heterotetramer consisting of two non-identical subunits: a beta subunit (TrpG) and a large alpha subunit (TrpE).

It carries out the reaction chorismate + L-glutamine = anthranilate + pyruvate + L-glutamate + H(+). It functions in the pathway amino-acid biosynthesis; L-tryptophan biosynthesis; L-tryptophan from chorismate: step 1/5. In terms of biological role, part of a heterotetrameric complex that catalyzes the two-step biosynthesis of anthranilate, an intermediate in the biosynthesis of L-tryptophan. In the first step, the glutamine-binding beta subunit (TrpG) of anthranilate synthase (AS) provides the glutamine amidotransferase activity which generates ammonia as a substrate that, along with chorismate, is used in the second step, catalyzed by the large alpha subunit of AS (TrpE) to produce anthranilate. In the absence of TrpG, TrpE can synthesize anthranilate directly from chorismate and high concentrations of ammonia. The sequence is that of Anthranilate synthase component 2 (trpG) from Methanothermobacter thermautotrophicus (strain ATCC 29096 / DSM 1053 / JCM 10044 / NBRC 100330 / Delta H) (Methanobacterium thermoautotrophicum).